Here is a 37-residue protein sequence, read N- to C-terminus: Protease 2 large chain (37 aa).

Positions 1 to 14 are enriched in basic and acidic residues; that stretch reads NDGNGRDSDPHDPG. The tract at residues 1 to 37 is disordered; that stretch reads NDGNGRDSDPHDPGDWTTAGQCGLWQPARNSQHWTLV. Positions 28–37 are enriched in polar residues; sequence ARNSQHWTLV.

The protein belongs to the peptidase S8 family. As to quaternary structure, heterodimer of a large and a small chain.

Its subcellular location is the secreted. This chain is Protease 2 large chain, found in Achromobacter lyticus.